The sequence spans 464 residues: Clusterin-like protein 1 (464 aa).

The signal sequence occupies residues 1–20; that stretch reads MQPPLFVISVYLLWLKYCDS. Residues 56–109 adopt a coiled-coil conformation; the sequence is IKQMKIMMERREEEHAKLMKALKKCKEEKQEAQKLMNEVQERLEEEEKLCQASS. 5 disulfides stabilise this stretch: cysteine 105–cysteine 331, cysteine 116–cysteine 323, cysteine 119–cysteine 320, cysteine 124–cysteine 313, and cysteine 131–cysteine 303. N-linked (GlcNAc...) asparagine glycosylation is found at asparagine 195, asparagine 255, asparagine 309, asparagine 349, asparagine 398, and asparagine 429.

Belongs to the clusterin family.

The protein localises to the secreted. In Rattus norvegicus (Rat), this protein is Clusterin-like protein 1.